Consider the following 704-residue polypeptide: D-(-)-3-hydroxybutyrate oligomer hydrolase (704 aa).

The signal sequence occupies residues 1-31 (MTTTNRNNLKLTALTAAVLTLSACGGSDAVA). Serine 309 (charge relay system) is an active-site residue.

This sequence belongs to the D-(-)-3-hydroxybutyrate oligomer hydrolase family.

It is found in the secreted. It catalyses the reaction (3R)-hydroxybutanoate dimer + H2O = 2 (R)-3-hydroxybutanoate + H(+). The protein operates within lipid metabolism; butanoate metabolism. In terms of biological role, participates in the degradation of poly-3-hydroxybutyrate (PHB). It works downstream of poly(3-hydroxybutyrate) depolymerase, hydrolyzing D(-)-3-hydroxybutyrate oligomers of various length (3HB-oligomers) into 3HB-monomers. This chain is D-(-)-3-hydroxybutyrate oligomer hydrolase, found in Albidiferax ferrireducens (strain ATCC BAA-621 / DSM 15236 / T118) (Rhodoferax ferrireducens).